The primary structure comprises 142 residues: MNKTQVPSLITSQSWYVIDAKNQKLGRMSTHISNILRGKNKPSYTPYLDTGDYVIVINSSEVSVSGNKTTQKLYRRHSGQPGGLKVETFEQLQTRLPNRIVEKSVKGMLPKGPLGRKLFTKLKVYPGPSHPHAAQKPQEYMV.

It belongs to the universal ribosomal protein uL13 family. As to quaternary structure, part of the 50S ribosomal subunit.

It localises to the plastid. It is found in the chloroplast. In Porphyra purpurea (Red seaweed), this protein is Large ribosomal subunit protein uL13c.